Here is a 367-residue protein sequence, read N- to C-terminus: Mitogen-activated protein kinase 12 (367 aa).

The region spanning 27–311 is the Protein kinase domain; that stretch reads YQDLQPVGSG…AAEALAHPYF (285 aa). ATP-binding positions include 33-41 and K56; that span reads VGSGAYGAV. Residue D153 is the Proton acceptor of the active site. The residue at position 183 (T183) is a Phosphothreonine; by MAP2K3 and MAP2K6. The TXY signature appears at 183 to 185; the sequence is TGY. Y185 carries the post-translational modification Phosphotyrosine; by MAP2K3 and MAP2K6.

It belongs to the protein kinase superfamily. CMGC Ser/Thr protein kinase family. MAP kinase subfamily. As to quaternary structure, monomer. Interacts with the PDZ domain of the syntrophin SNTA1. Interacts with LIN7C, SCRIB, SYNJ2BP and SH3BP5. Interacts with PTPN4; this interaction induces the activation of PTPN4 phosphatase activity. The cofactor is Mg(2+). In terms of processing, dually phosphorylated on Thr-183 and Tyr-185 by MAP2K3/MKK3 and MAP2K6/MKK6, which activates the enzyme. Post-translationally, ubiquitinated. Ubiquitination leads to degradation by the proteasome pathway. As to expression, highly expressed in skeletal muscle, lung and testes and also in the heart and thymus of both adult and neonatal rats.

The protein resides in the cytoplasm. It localises to the nucleus. Its subcellular location is the mitochondrion. The enzyme catalyses L-seryl-[protein] + ATP = O-phospho-L-seryl-[protein] + ADP + H(+). It catalyses the reaction L-threonyl-[protein] + ATP = O-phospho-L-threonyl-[protein] + ADP + H(+). With respect to regulation, activated by phosphorylation on threonine and tyrosine. MAP2K3/MKK3 and MAP2K6/MKK6 are both essential for the activation of MAPK12 induced by environmental stress, whereas MAP2K6/MKK6 is the major MAPK12 activator in response to TNF-alpha. In terms of biological role, serine/threonine kinase which acts as an essential component of the MAP kinase signal transduction pathway. MAPK12 is one of the four p38 MAPKs which play an important role in the cascades of cellular responses evoked by extracellular stimuli such as pro-inflammatory cytokines or physical stress leading to direct activation of transcription factors such as ELK1 and ATF2. Accordingly, p38 MAPKs phosphorylate a broad range of proteins and it has been estimated that they may have approximately 200 to 300 substrates each. Some of the targets are downstream kinases such as MAPKAPK2, which are activated through phosphorylation and further phosphorylate additional targets. Plays a role in myoblast differentiation and also in the down-regulation of cyclin D1 in response to hypoxia in adrenal cells suggesting MAPK12 may inhibit cell proliferation while promoting differentiation. Phosphorylates DLG1. Following osmotic shock, MAPK12 in the cell nucleus increases its association with nuclear DLG1, thereby causing dissociation of DLG1-SFPQ complexes. This function is independent of its catalytic activity and could affect mRNA processing and/or gene transcription to aid cell adaptation to osmolarity changes in the environment. Regulates UV-induced checkpoint signaling and repair of UV-induced DNA damage and G2 arrest after gamma-radiation exposure. MAPK12 is involved in the regulation of SLC2A1 expression and basal glucose uptake in L6 myotubes; and negatively regulates SLC2A4 expression and contraction-mediated glucose uptake in adult skeletal muscle. C-Jun (JUN) phosphorylation is stimulated by MAPK14 and inhibited by MAPK12, leading to a distinct AP-1 regulation. MAPK12 is required for the normal kinetochore localization of PLK1, prevents chromosomal instability and supports mitotic cell viability. MAPK12-signaling is also positively regulating the expansion of transient amplifying myogenic precursor cells during muscle growth and regeneration. In Rattus norvegicus (Rat), this protein is Mitogen-activated protein kinase 12 (Mapk12).